Reading from the N-terminus, the 476-residue chain is Scopoletin glucosyltransferase (476 aa).

His-16 serves as the catalytic Proton acceptor. His-16 serves as a coordination point for an anthocyanidin. Asp-119 acts as the Charge relay in catalysis. Ala-343, Gln-345, His-360, Trp-363, Asn-364, Ser-365, and Glu-368 together coordinate UDP-alpha-D-glucose. Ala-383 is a binding site for an anthocyanidin. UDP-alpha-D-glucose contacts are provided by Glu-384 and Gln-385.

Belongs to the UDP-glycosyltransferase family.

It carries out the reaction scopoletin + UDP-alpha-D-glucose = scopolin + UDP + H(+). Glucosyltransferase acting preferentially on aromatic substrates of the phenylpropanoid types. The best substrates are scopoletin and esculetin. Required for full resistance to virus. The polypeptide is Scopoletin glucosyltransferase (TOGT1) (Nicotiana tabacum (Common tobacco)).